We begin with the raw amino-acid sequence, 325 residues long: NADH-quinone oxidoreductase subunit H (325 aa).

9 consecutive transmembrane segments (helical) span residues 11 to 31, 50 to 69, 81 to 101, 114 to 134, 154 to 174, 186 to 206, 237 to 257, 265 to 285, and 304 to 324; these read ILLT…CGAF, SRVG…KMFF, LIFT…FAIV, IGIL…LFAG, LSYE…AGSF, LWNI…GVAV, FFVG…TLFF, LPPF…FILV, and ICLP…LYHA.

It belongs to the complex I subunit 1 family. NDH-1 is composed of 13 different subunits. Subunits NuoA, H, J, K, L, M, N constitute the membrane sector of the complex.

It localises to the cell inner membrane. The catalysed reaction is a quinone + NADH + 5 H(+)(in) = a quinol + NAD(+) + 4 H(+)(out). NDH-1 shuttles electrons from NADH, via FMN and iron-sulfur (Fe-S) centers, to quinones in the respiratory chain. The immediate electron acceptor for the enzyme in this species is believed to be ubiquinone. Couples the redox reaction to proton translocation (for every two electrons transferred, four hydrogen ions are translocated across the cytoplasmic membrane), and thus conserves the redox energy in a proton gradient. This subunit may bind ubiquinone. The sequence is that of NADH-quinone oxidoreductase subunit H from Edwardsiella ictaluri (strain 93-146).